Consider the following 549-residue polypeptide: Undecaprenyl phosphate-alpha-4-amino-4-deoxy-L-arabinose arabinosyl transferase 1 (549 aa).

Helical transmembrane passes span 9 to 29 (LLLI…GLWI), 80 to 102 (LFGV…YLLA), 112 to 132 (SLAS…AGYA), 133 to 153 (NLDP…WFTF), 176 to 196 (FMTK…PYAI), 204 to 224 (LLIY…PWAL), 257 to 277 (WWYY…LLPA), 290 to 310 (SSGF…LSKG), 312 to 332 (LPAY…NTLV), 342 to 362 (LLAF…LALV), 377 to 397 (HLVL…LQAM), and 402 to 422 (LWAA…AALP).

This sequence belongs to the glycosyltransferase 83 family.

It is found in the cell inner membrane. It catalyses the reaction 4-amino-4-deoxy-alpha-L-arabinopyranosyl di-trans,octa-cis-undecaprenyl phosphate + lipid IVA = lipid IIA + di-trans,octa-cis-undecaprenyl phosphate.. Its pathway is lipopolysaccharide metabolism; 4-amino-4-deoxy-beta-L-arabinose-lipid A biosynthesis. Functionally, catalyzes the transfer of the L-Ara4N moiety of the glycolipid undecaprenyl phosphate-alpha-L-Ara4N to lipid A. The modified arabinose is attached to lipid A and is required for resistance to polymyxin and cationic antimicrobial peptides. This chain is Undecaprenyl phosphate-alpha-4-amino-4-deoxy-L-arabinose arabinosyl transferase 1, found in Pseudomonas fluorescens (strain ATCC BAA-477 / NRRL B-23932 / Pf-5).